The following is a 184-amino-acid chain: ATP synthase subunit b, chloroplastic (184 aa).

The helical transmembrane segment at 27–49 (LATNLINLSVVLGVLVFFGKGVL) threads the bilayer.

Belongs to the ATPase B chain family. In terms of assembly, F-type ATPases have 2 components, F(1) - the catalytic core - and F(0) - the membrane proton channel. F(1) has five subunits: alpha(3), beta(3), gamma(1), delta(1), epsilon(1). F(0) has four main subunits: a(1), b(1), b'(1) and c(10-14). The alpha and beta chains form an alternating ring which encloses part of the gamma chain. F(1) is attached to F(0) by a central stalk formed by the gamma and epsilon chains, while a peripheral stalk is formed by the delta, b and b' chains.

It is found in the plastid. Its subcellular location is the chloroplast thylakoid membrane. In terms of biological role, f(1)F(0) ATP synthase produces ATP from ADP in the presence of a proton or sodium gradient. F-type ATPases consist of two structural domains, F(1) containing the extramembraneous catalytic core and F(0) containing the membrane proton channel, linked together by a central stalk and a peripheral stalk. During catalysis, ATP synthesis in the catalytic domain of F(1) is coupled via a rotary mechanism of the central stalk subunits to proton translocation. Functionally, component of the F(0) channel, it forms part of the peripheral stalk, linking F(1) to F(0). In Cicer arietinum (Chickpea), this protein is ATP synthase subunit b, chloroplastic.